The primary structure comprises 472 residues: WASH complex subunit 1 (472 aa).

Positions 1-51 (MPQNRSMESQAYSLPLILPDLRREEAIHQITDTLQHLQTVSNDIFSRILQR) are required for WASH complex assembly. Disordered stretches follow at residues 289–365 (ENSR…SDGR), 377–412 (GIGKAKLRNVKEKKLEKKKMKEQEQVRATGGGGDLM), and 426–472 (ISGK…DWES). 2 stretches are compositionally biased toward pro residues: residues 301 to 319 (LPPPPPPPPPPPPPPPPEP) and 327 to 336 (SLAPPLPIPA). Residues 352 to 472 (QGAPKEVVNP…GDGDEEDWES (121 aa)) form a VCA region. One can recognise a WH2 domain in the interval 364-386 (GRASLLESIRQAGGIGKAKLRNV). Basic and acidic residues predominate over residues 385-401 (NVKEKKLEKKKMKEQEQ).

Belongs to the WASH1 family. Component of the WASH complex.

Its subcellular location is the early endosome membrane. The protein resides in the recycling endosome membrane. Its function is as follows. Acts as a nucleation-promoting factor at the surface of endosomes, where it recruits and activates the Arp2/3 complex to induce actin polymerization, playing a key role in the fission of tubules that serve as transport intermediates during endosome sorting. This is WASH complex subunit 1 from Xenopus tropicalis (Western clawed frog).